The following is a 554-amino-acid chain: Solute carrier family 22 member 22 (554 aa).

Residues Met-1 to Arg-15 lie on the Cytoplasmic side of the membrane. The helical transmembrane segment at Phe-16–Val-36 threads the bilayer. Over Leu-37 to Lys-144 the chain is Extracellular. Asn-39 carries an N-linked (GlcNAc...) asparagine glycan. A helical transmembrane segment spans residues Tyr-145–Ile-165. Residues Ser-166 to Lys-172 are Cytoplasmic-facing. A helical membrane pass occupies residues Pro-173–Pro-193. An N-linked (GlcNAc...) asparagine glycan is attached at Asn-194. Over Asn-194–Cys-199 the chain is Extracellular. A helical membrane pass occupies residues Val-200–Val-220. Topologically, residues Leu-221–Thr-231 are cytoplasmic. The helical transmembrane segment at Ile-232–Tyr-252 threads the bilayer. Residues Val-253–His-258 are Extracellular-facing. Residues Leu-259–Pro-279 form a helical membrane-spanning segment. At Glu-280–Lys-347 the chain is on the cytoplasmic side. A helical transmembrane segment spans residues Ile-348–Leu-368. Residues Asp-369–Asn-376 lie on the Extracellular side of the membrane. A helical transmembrane segment spans residues Met-377–Phe-397. Residues Thr-398 to Arg-405 are Cytoplasmic-facing. The helical transmembrane segment at Pro-406 to Ser-426 threads the bilayer. Topologically, residues Glu-427 to Thr-434 are extracellular. A helical membrane pass occupies residues Ile-435 to Ile-455. Residues Asn-456–Thr-466 are Cytoplasmic-facing. A helical membrane pass occupies residues Leu-467–Ala-487. Over Thr-488–Tyr-491 the chain is Extracellular. The chain crosses the membrane as a helical span at residues Phe-492–Leu-512. Over Phe-513–Cys-554 the chain is Cytoplasmic.

This sequence belongs to the major facilitator (TC 2.A.1) superfamily. Organic cation transporter (TC 2.A.1.19) family. In terms of tissue distribution, specifically expressed in kidney where it is found in proximal convoluted tubules (at protein level). Colocalizes with the prostaglandin-inactivating enzyme HPGD in kidney (at protein level). Not detected in other tissues tested.

The protein resides in the basolateral cell membrane. Its function is as follows. Sodium-independent organic anion transporter which exhibits high specificity for a subset of prostaglandins including prostaglandin E2 (PGE2), prostaglandin E1 (PGE1), prostaglandin F2-alpha (PGF2-alpha) and prostaglandin D2 (PGD2). This Mus musculus (Mouse) protein is Solute carrier family 22 member 22.